The sequence spans 1073 residues: DNA-directed RNA polymerase subunit beta (1073 aa).

This sequence belongs to the RNA polymerase beta chain family. In terms of assembly, in plastids the minimal PEP RNA polymerase catalytic core is composed of four subunits: alpha, beta, beta', and beta''. When a (nuclear-encoded) sigma factor is associated with the core the holoenzyme is formed, which can initiate transcription.

It is found in the plastid. Its subcellular location is the chloroplast. The catalysed reaction is RNA(n) + a ribonucleoside 5'-triphosphate = RNA(n+1) + diphosphate. In terms of biological role, DNA-dependent RNA polymerase catalyzes the transcription of DNA into RNA using the four ribonucleoside triphosphates as substrates. This Aethionema grandiflorum (Persian stone-cress) protein is DNA-directed RNA polymerase subunit beta.